We begin with the raw amino-acid sequence, 512 residues long: MEILSLILYTVIFSFLLQFILRSFFRKRYPLPLPPGPKPWPIIGNLVHLGPKPHQSTAAMAQTYGPLMYLKMGFVDVVVAASASVAAQFLKTHDANFSSRPPNSGAEHMAYNYQDLVFAPYGPRWRMLRKICSVHLFSTKALDDFRHVRQDEVKTLTRALASAGQKPVKLGQLLNVCTTNALARVMLGKRVFADGSGDVDPQAAEFKSMVVEMMVVAGVFNIGDFIPQLNWLDIQGVAAKMKKLHARFDAFLTDILEEHKGKIFGEMKDLLSTLISLKNDDADNDGGKLTDTEIKALLLNLFVAGTDTSSSTVEWAIAELIRNPKILAQAQQEIDKVVGRDRLVGELDLAQLTYLEAIVKETFRLHPSTPLSLPRIASESCEINGYFIPKGSTLLLNVWAIARDPNAWADPLEFRPERFLPGGEKPKVDVRGNDFEVIPFGAGRRICAGMNLGIRMVQLMIATLIHAFNWDLVSGQLPEMLNMEEAYGLTLQRADPLVVHPRPRLEAQAYIG.

Residues 1-21 (MEILSLILYTVIFSFLLQFIL) traverse the membrane as a helical segment. At 22–512 (RSFFRKRYPL…PRLEAQAYIG (491 aa)) the chain is on the cytoplasmic side. C447 serves as a coordination point for heme.

This sequence belongs to the cytochrome P450 family. Heme is required as a cofactor. As to expression, high expression in petals and ovaries and to a lower extent in sepals, pedicels, anthers and stems. Not detected in leaves, style or roots.

The protein resides in the endoplasmic reticulum membrane. It carries out the reaction a 3'-unsubstituted flavone + reduced [NADPH--hemoprotein reductase] + O2 = a 3'-hydroxyflavone + oxidized [NADPH--hemoprotein reductase] + H2O + H(+). Its pathway is secondary metabolite biosynthesis; flavonoid biosynthesis. Catalyzes the 3'-hydroxylation of the flavonoid B-ring to the 3',4'-hydroxylated state. Convert naringenin to eriodictyol and dihydrokaempferol to dihydroquercetin. The polypeptide is Flavonoid 3'-monooxygenase (CYP75B2) (Petunia hybrida (Petunia)).